The sequence spans 352 residues: Biotin synthase (352 aa).

A Radical SAM core domain is found at 44–262 (NRVQVSTLLS…LAVARILMPQ (219 aa)). Residues Cys-59, Cys-63, and Cys-66 each coordinate [4Fe-4S] cluster. [2Fe-2S] cluster contacts are provided by Cys-103, Cys-134, Cys-194, and Arg-266.

It belongs to the radical SAM superfamily. Biotin synthase family. Homodimer. [4Fe-4S] cluster serves as cofactor. It depends on [2Fe-2S] cluster as a cofactor.

It catalyses the reaction (4R,5S)-dethiobiotin + (sulfur carrier)-SH + 2 reduced [2Fe-2S]-[ferredoxin] + 2 S-adenosyl-L-methionine = (sulfur carrier)-H + biotin + 2 5'-deoxyadenosine + 2 L-methionine + 2 oxidized [2Fe-2S]-[ferredoxin]. Its pathway is cofactor biosynthesis; biotin biosynthesis; biotin from 7,8-diaminononanoate: step 2/2. Catalyzes the conversion of dethiobiotin (DTB) to biotin by the insertion of a sulfur atom into dethiobiotin via a radical-based mechanism. In Pseudomonas syringae pv. tomato (strain ATCC BAA-871 / DC3000), this protein is Biotin synthase.